Reading from the N-terminus, the 458-residue chain is Bifunctional protein HldE (458 aa).

The segment at 1–311 (MVNVLVVGDL…ENLKSKKSGF (311 aa)) is ribokinase. 189 to 192 (NKKE) lines the ATP pocket. The active site involves Asp257. Residues 333 to 458 (FTNGCFDILH…TTNIINKIKG (126 aa)) are cytidylyltransferase.

It in the N-terminal section; belongs to the carbohydrate kinase PfkB family. This sequence in the C-terminal section; belongs to the cytidylyltransferase family. As to quaternary structure, homodimer.

It carries out the reaction D-glycero-beta-D-manno-heptose 7-phosphate + ATP = D-glycero-beta-D-manno-heptose 1,7-bisphosphate + ADP + H(+). It catalyses the reaction D-glycero-beta-D-manno-heptose 1-phosphate + ATP + H(+) = ADP-D-glycero-beta-D-manno-heptose + diphosphate. It functions in the pathway nucleotide-sugar biosynthesis; ADP-L-glycero-beta-D-manno-heptose biosynthesis; ADP-L-glycero-beta-D-manno-heptose from D-glycero-beta-D-manno-heptose 7-phosphate: step 1/4. The protein operates within nucleotide-sugar biosynthesis; ADP-L-glycero-beta-D-manno-heptose biosynthesis; ADP-L-glycero-beta-D-manno-heptose from D-glycero-beta-D-manno-heptose 7-phosphate: step 3/4. Catalyzes the phosphorylation of D-glycero-D-manno-heptose 7-phosphate at the C-1 position to selectively form D-glycero-beta-D-manno-heptose-1,7-bisphosphate. Its function is as follows. Catalyzes the ADP transfer from ATP to D-glycero-beta-D-manno-heptose 1-phosphate, yielding ADP-D-glycero-beta-D-manno-heptose. The protein is Bifunctional protein HldE of Campylobacter fetus subsp. fetus (strain 82-40).